Consider the following 386-residue polypeptide: MMMMGEGVSSVPPWSHLPVSGVDVLGGGGGGGDEMTPYVIAALRDYLPANDVGVGADEEEEAAAMAAAVDAYACDEFRMYEFKVRRCARGRSHDWTECPFAHPGEKARRRDPRKYHYSGTACPDFRKGGCKRGDACEYAHGVFECWLHPARYRTQPCKDGTACRRRVCFFAHTPDQLRVLPAQQSSPRSVASSPLAESYDGSPLRRQAFESYLTKTIMSSSPTSTLMSPPKSPPSESPPLSPDGAAAIRRGSWPGVGSPVNDVLASFRQLRLNKVKSSPSGGWSYPSSSAVYGSPKAATGLYSLPTTPLASTATVTTASSFMPNLEPLDLGLIGDEEPVQRVESGRALREKVFERLSRDGAISGDATAFATAGVGLDVDWVSDLIN.

2 C3H1-type zinc fingers span residues 116–143 (HYSG…HGVF) and 151–175 (RYRT…HTPD). 2 disordered regions span residues 180–200 (LPAQ…ESYD) and 220–252 (SSPT…RRGS). Over residues 182–192 (AQQSSPRSVAS) the composition is skewed to polar residues. Residues 220–229 (SSPTSTLMSP) are compositionally biased toward low complexity. The span at 230–241 (PKSPPSESPPLS) shows a compositional bias: pro residues.

The protein resides in the nucleus. In terms of biological role, involved in leaf senescence delay. May repress jasmonic acid (JA) signaling role in promoting leaf senescence. May regulate panicle development and pollination/fertilization process. This is Zinc finger CCCH domain-containing protein 2 from Oryza sativa subsp. japonica (Rice).